The chain runs to 930 residues: Carnosine synthase 1 (930 aa).

Positions M1–E24 are disordered. The 202-residue stretch at R624 to L825 folds into the ATP-grasp domain. V650–D716 lines the ATP pocket. E782, E794, and N796 together coordinate Mg(2+). Mn(2+) is bound by residues E782, E794, and N796.

As to quaternary structure, homotetramer. Requires Mg(2+) as cofactor. Mn(2+) is required as a cofactor.

It catalyses the reaction beta-alanine + L-histidine + ATP = carnosine + ADP + phosphate + H(+). It carries out the reaction 4-aminobutanoate + L-histidine + ATP = L-homocarnosine + ADP + phosphate + H(+). Catalyzes the synthesis of carnosine and homocarnosine. Carnosine is synthesized more efficiently than homocarnosine. The polypeptide is Carnosine synthase 1 (Gallus gallus (Chicken)).